A 182-amino-acid polypeptide reads, in one-letter code: MSFSVKGRSLRGNNNGGTGTKCGRWNPTVEQLKILTDLFRAGLRTPTTDQIQKISTELSFYGKIESKNVFYWFQNHKARERQKRRKISIDFDHHHHQPSTRDVFEISEEDCQEEEKVIETLQLFPVNSFEDSNSKVDKMRARGNNQYREYIRETTTTSFSPYSSCGAEMEHPPPLDLRLSFL.

The segment at 1–24 (MSFSVKGRSLRGNNNGGTGTKCGR) is disordered. Positions 20–84 (TKCGRWNPTV…NHKARERQKR (65 aa)) form a DNA-binding region, homeobox; WUS-type.

This sequence belongs to the WUS homeobox family. In terms of tissue distribution, specifically expressed in the central cells of a quiescent center (QC) of the root.

The protein resides in the nucleus. Its function is as follows. Transcription factor, which may be involved in the specification and maintenance of the stem cells (QC cells) in the root apical meristem (RAM). The polypeptide is WUSCHEL-related homeobox 5 (WOX5) (Arabidopsis thaliana (Mouse-ear cress)).